Consider the following 194-residue polypeptide: Homing endonuclease I-DmoI (194 aa).

The region spanning 14–147 is the DOD-type homing endonuclease domain; sequence LLGLIIGDGG…VSRWLNNLGV (134 aa). Catalysis depends on residues D21 and E117.

The cofactor is a divalent metal cation.

Endonuclease involved in intron homing. Recognizes DNA in the 23S rRNA gene intron (minimally 5'-CCGGGTAAGTTCCGG-3'), cutting after A-8 on the top and C-11 on the bottom strand. Has a slow turnover rate, cuts the coding strand with a slight preference over the non-coding strand. This Desulfurococcus mucosus (Desulfurococcus mobilis) protein is Homing endonuclease I-DmoI.